The following is a 205-amino-acid chain: Putative 3-methyladenine DNA glycosylase (205 aa).

The protein belongs to the DNA glycosylase MPG family.

The polypeptide is Putative 3-methyladenine DNA glycosylase (Bacillus cereus (strain ZK / E33L)).